We begin with the raw amino-acid sequence, 253 residues long: 5'-nucleotidase SurE (253 aa).

Positions 8, 9, 39, and 95 each coordinate a divalent metal cation.

Belongs to the SurE nucleotidase family. A divalent metal cation is required as a cofactor.

Its subcellular location is the cytoplasm. It catalyses the reaction a ribonucleoside 5'-phosphate + H2O = a ribonucleoside + phosphate. Its function is as follows. Nucleotidase that shows phosphatase activity on nucleoside 5'-monophosphates. The protein is 5'-nucleotidase SurE of Chloroflexus aggregans (strain MD-66 / DSM 9485).